The following is a 452-amino-acid chain: Cobyrinate a,c-diamide synthase (452 aa).

One can recognise a GATase cobBQ-type domain in the interval 244-437; it reads KIAYAYDEAF…VHINLYTYKE (194 aa). The Nucleophile role is filled by cysteine 327.

The protein belongs to the CobB/CbiA family. The cofactor is Mg(2+).

The enzyme catalyses cob(II)yrinate + 2 L-glutamine + 2 ATP + 2 H2O = cob(II)yrinate a,c diamide + 2 L-glutamate + 2 ADP + 2 phosphate + 2 H(+). Its pathway is cofactor biosynthesis; adenosylcobalamin biosynthesis; cob(II)yrinate a,c-diamide from sirohydrochlorin (anaerobic route): step 10/10. In terms of biological role, catalyzes the ATP-dependent amidation of the two carboxylate groups at positions a and c of cobyrinate, using either L-glutamine or ammonia as the nitrogen source. This is Cobyrinate a,c-diamide synthase from Caldanaerobacter subterraneus subsp. tengcongensis (strain DSM 15242 / JCM 11007 / NBRC 100824 / MB4) (Thermoanaerobacter tengcongensis).